The primary structure comprises 202 residues: MQRVTSYLPAGTPSSHPTAQVKLPHDLRHLRRKLLHLENGEMVMLDLKDPVLFANGDLLVREDGELIEILAADEKLFEIRGRDRTHLVELAWHLGNRHLAAQIEEDRIVILRDHVIRNMLQGLGATVLEINEPFQPARGAYHSHGGHSHDHGHAAHDHGHAAHDHGHNHDHDHGHAHGHDHQHDHNCDHDHDHGHHHGHKHD.

A disordered region spans residues 138-202 (RGAYHSHGGH…HGHHHGHKHD (65 aa)). Residues 147 to 193 (HSHDHGHAAHDHGHAAHDHGHNHDHDHGHAHGHDHQHDHNCDHDHDH) show a composition bias toward basic and acidic residues.

The protein belongs to the UreE family.

It is found in the cytoplasm. Its function is as follows. Involved in urease metallocenter assembly. Binds nickel. Probably functions as a nickel donor during metallocenter assembly. This Rhizobium etli (strain CIAT 652) protein is Urease accessory protein UreE.